We begin with the raw amino-acid sequence, 219 residues long: Large ribosomal subunit protein uL3 (219 aa).

The interval 136 to 156 (GASHGAHRNHRKPGSIGGCAT) is disordered.

Belongs to the universal ribosomal protein uL3 family. As to quaternary structure, part of the 50S ribosomal subunit. Forms a cluster with proteins L14 and L19.

Functionally, one of the primary rRNA binding proteins, it binds directly near the 3'-end of the 23S rRNA, where it nucleates assembly of the 50S subunit. The polypeptide is Large ribosomal subunit protein uL3 (Kineococcus radiotolerans (strain ATCC BAA-149 / DSM 14245 / SRS30216)).